Here is a 132-residue protein sequence, read N- to C-terminus: Small ribosomal subunit protein uS8 (132 aa).

Belongs to the universal ribosomal protein uS8 family. As to quaternary structure, part of the 30S ribosomal subunit. Contacts proteins S5 and S12.

Functionally, one of the primary rRNA binding proteins, it binds directly to 16S rRNA central domain where it helps coordinate assembly of the platform of the 30S subunit. In Caldicellulosiruptor bescii (strain ATCC BAA-1888 / DSM 6725 / KCTC 15123 / Z-1320) (Anaerocellum thermophilum), this protein is Small ribosomal subunit protein uS8.